The chain runs to 190 residues: Putative 3-methyladenine DNA glycosylase (190 aa).

This sequence belongs to the DNA glycosylase MPG family.

The polypeptide is Putative 3-methyladenine DNA glycosylase (Rubrobacter xylanophilus (strain DSM 9941 / JCM 11954 / NBRC 16129 / PRD-1)).